The primary structure comprises 379 residues: Origin of replication complex subunit 2 (379 aa).

The tract at residues 1–25 (MALRGGHAAAAAGVSSGSEDDDEEA) is disordered. Positions 8–17 (AAAAAGVSSG) are enriched in low complexity.

This sequence belongs to the ORC2 family. Component of the origin recognition complex (ORC) composed of at least ORC1, ORC2, ORC3, ORC4, ORC5 and ORC6. ORC is regulated in a cell-cycle and development dependent manner. It is sequentially assembled at the exit from anaphase of mitosis and disassembled as cells enter S phase.

It localises to the nucleus. In terms of biological role, essential protein. Component of the origin recognition complex (ORC) that binds origins of replication. DNA-binding is ATP-dependent, however specific DNA sequences that define origins of replication have not been identified so far. ORC is required to assemble the pre-replication complex necessary to initiate DNA replication. The chain is Origin of replication complex subunit 2 from Oryza sativa subsp. indica (Rice).